The primary structure comprises 414 residues: xyloglucan O-acetyltransferase 2 (414 aa).

The Cytoplasmic segment spans residues 1–26; sequence MKSSSSIFRETSEKKSERWMMMNIGR. Residues 27-47 traverse the membrane as a helical; Signal-anchor for type II membrane protein segment; it reads FSPFFLSSFCITLFFTGFFVY. Topologically, residues 48 to 414 are lumenal; it reads QNPFKSIADQ…FLMAIIRQLR (367 aa). 4 disulfides stabilise this stretch: Cys70–Cys120, Cys91–Cys156, Cys100–Cys394, and Cys317–Cys390. A glycan (N-linked (GlcNAc...) asparagine) is linked at Asn88. The short motif at 143-145 is the GDS motif element; sequence GDS. Ser145 serves as the catalytic Nucleophile. Asn205, Asn263, and Asn308 each carry an N-linked (GlcNAc...) asparagine glycan. Asp389 (proton donor) is an active-site residue. Positions 389-392 match the DXXH motif motif; that stretch reads DCVH. The active-site Proton acceptor is the His392.

This sequence belongs to the PC-esterase family. TBL subfamily.

The protein resides in the membrane. In terms of biological role, xyloglucan acetyltransferase that catalyzes the acetylation of fucosylated Gal residues on xyloglucan side chains. Predominantly catalyze 6-O-monoacetylation of Gal residues in the Fuc-Gal-Xyl trisaccharide side chains of xyloglucan oligomers. Involved in xyloglucan specific O-acetylation in seeds. The sequence is that of xyloglucan O-acetyltransferase 2 from Arabidopsis thaliana (Mouse-ear cress).